The chain runs to 328 residues: Pantothenate kinase (328 aa).

Positions 1 to 12 are enriched in polar residues; that stretch reads MAAPLNAQTRAP. The interval 1 to 22 is disordered; sequence MAAPLNAQTRAPQATGRAPDFS. ATP is bound at residue 113–120; the sequence is GSVAVGKS.

The protein belongs to the prokaryotic pantothenate kinase family.

The protein localises to the cytoplasm. It carries out the reaction (R)-pantothenate + ATP = (R)-4'-phosphopantothenate + ADP + H(+). Its pathway is cofactor biosynthesis; coenzyme A biosynthesis; CoA from (R)-pantothenate: step 1/5. In Corynebacterium efficiens (strain DSM 44549 / YS-314 / AJ 12310 / JCM 11189 / NBRC 100395), this protein is Pantothenate kinase.